The primary structure comprises 289 residues: ADP-polyphosphate phosphotransferase (289 aa).

It belongs to the polyphosphate kinase 2 (PPK2) family. Class I subfamily.

It carries out the reaction [phosphate](n) + ATP = [phosphate](n+1) + ADP. In terms of biological role, uses inorganic polyphosphate (polyP) as a donor to convert ADP to ATP. This chain is ADP-polyphosphate phosphotransferase, found in Rhodopseudomonas palustris (strain ATCC BAA-98 / CGA009).